Here is a 369-residue protein sequence, read N- to C-terminus: MTAIEKFFTEKSPDSEQVLLKVIELGIDFLGGEWKNVDKSQVNVSRVHGGQSNHMFHVTSSTSATPYLLRIHRQPPSQVFTDTVNLAIFSERGLGPKLYGFFEGGRMEEFLPSKTFDVNDVLVPENSRKIGAIFPLYHSINVPVSKSRRCVHLMREWLNGYESLGGGDYEILPTTVNYSDHPKSVSIKDLNHEIDNFEKWSTEIFEHTLVFSHNDLASTNILELNSTKELVLIDWEFGTYNWRGFDLAMHLSETAIDYRVPFPPGIKMNGDLIDNPPNIQIFCEAYVEADKKLKNRSPSDPTAEVKALIQECQFFWPLTNLFWALSAMKHSLLKFENGVDLDVQARDRLAVYFHLKPRSQKIYEELSKK.

It belongs to the choline/ethanolamine kinase family. Mg(2+) is required as a cofactor.

It catalyses the reaction choline + ATP = phosphocholine + ADP + H(+). The protein operates within phospholipid metabolism; phosphatidylcholine biosynthesis; phosphocholine from choline: step 1/1. Its function is as follows. Catalyzes the first step in phosphatidylcholine biosynthesis. Phosphorylates choline. The polypeptide is Choline kinase B2 (ckb-2) (Caenorhabditis elegans).